The sequence spans 217 residues: Dihydroflavonol 4-reductase (217 aa).

Lys27 and Tyr146 together coordinate NADP(+).

Belongs to the NAD(P)-dependent epimerase/dehydratase family. Dihydroflavonol-4-reductase subfamily.

It catalyses the reaction a (2R,3S,4S)-leucoanthocyanidin + NADP(+) = a (2R,3R)-dihydroflavonol + NADPH + H(+). The catalysed reaction is (2S)-flavan-4-ol + NADP(+) = (2S)-flavanone + NADPH + H(+). The protein operates within pigment biosynthesis; anthocyanin biosynthesis. Bifunctional enzyme involved in flavonoid metabolism. This Medicago sativa (Alfalfa) protein is Dihydroflavonol 4-reductase (DFR1).